A 305-amino-acid polypeptide reads, in one-letter code: Glutaminase (305 aa).

Residues serine 61, asparagine 113, glutamate 158, asparagine 165, tyrosine 189, tyrosine 241, and valine 259 each contribute to the substrate site.

This sequence belongs to the glutaminase family. In terms of assembly, homotetramer.

The catalysed reaction is L-glutamine + H2O = L-glutamate + NH4(+). The chain is Glutaminase from Clostridium botulinum (strain 657 / Type Ba4).